Consider the following 161-residue polypeptide: Protein lin-52 (161 aa).

Residues 137 to 161 are disordered; it reads TGSASPRYLQPTPPKNVAEETTGSQ.

This sequence belongs to the lin-52 family. In terms of assembly, component of the DRM complex, at least composed of lin-9, lin-35, lin-37, lin-52, lin-53, lin-54- dpl-1 and efl-1. Interacts with zft-11; the interaction is required to suppress the activation of non-neuronal genes in neurons.

The protein localises to the nucleus. Functionally, synthetic multivulva class B (synMuvB) protein. SynMuvB proteins are required to repress the induction of vulval development by Ras signaling and probably act by forming the multiprotein DRM complex that represses transcription. In association with the zinc finger protein ztf-11, negatively regulates the expression of non-neuronal genes during neurogenesis. The sequence is that of Protein lin-52 from Caenorhabditis elegans.